Consider the following 149-residue polypeptide: Transcription antitermination protein NusB (149 aa).

This sequence belongs to the NusB family.

Involved in transcription antitermination. Required for transcription of ribosomal RNA (rRNA) genes. Binds specifically to the boxA antiterminator sequence of the ribosomal RNA (rrn) operons. The polypeptide is Transcription antitermination protein NusB (Acinetobacter baumannii (strain SDF)).